Here is a 527-residue protein sequence, read N- to C-terminus: Peptide chain release factor 3 (527 aa).

The tr-type G domain occupies 9–277 (AKRRTFAIIS…AVVDWAPRPL (269 aa)). GTP is bound by residues 18–25 (SHPDAGKT), 86–90 (DTPGH), and 140–143 (NKLD).

This sequence belongs to the TRAFAC class translation factor GTPase superfamily. Classic translation factor GTPase family. PrfC subfamily.

It is found in the cytoplasm. Its function is as follows. Increases the formation of ribosomal termination complexes and stimulates activities of RF-1 and RF-2. It binds guanine nucleotides and has strong preference for UGA stop codons. It may interact directly with the ribosome. The stimulation of RF-1 and RF-2 is significantly reduced by GTP and GDP, but not by GMP. The chain is Peptide chain release factor 3 from Ectopseudomonas mendocina (strain ymp) (Pseudomonas mendocina).